Consider the following 249-residue polypeptide: Ribonuclease 3 (249 aa).

In terms of domain architecture, RNase III spans 21–149; the sequence is VDHQPLIDAL…LLGAIYLAHG (129 aa). Glutamate 62 lines the Mg(2+) pocket. Aspartate 66 is a catalytic residue. Mg(2+) is bound by residues aspartate 135 and glutamate 138. Residue glutamate 138 is part of the active site. Positions 176-244 constitute a DRBM domain; it reads DWKTTLQERL…AHKAVGFLQD (69 aa).

Belongs to the ribonuclease III family. Homodimer. Requires Mg(2+) as cofactor.

The protein resides in the cytoplasm. It carries out the reaction Endonucleolytic cleavage to 5'-phosphomonoester.. Its function is as follows. Digests double-stranded RNA. Involved in the processing of primary rRNA transcript to yield the immediate precursors to the large and small rRNAs (23S and 16S). Processes some mRNAs, and tRNAs when they are encoded in the rRNA operon. Processes pre-crRNA and tracrRNA of type II CRISPR loci if present in the organism. The sequence is that of Ribonuclease 3 from Corynebacterium diphtheriae (strain ATCC 700971 / NCTC 13129 / Biotype gravis).